A 475-amino-acid chain; its full sequence is Putative poly(A) polymerase catalytic subunit (475 aa).

This sequence belongs to the poxviridae poly(A) polymerase catalytic subunit family. Highly divergent.

It is found in the virion. It catalyses the reaction RNA(n) + ATP = RNA(n)-3'-adenine ribonucleotide + diphosphate. Its function is as follows. Polymerase that creates the 3'-poly(A) tail of mRNA's. This is Putative poly(A) polymerase catalytic subunit from Ornithodoros (relapsing fever ticks).